A 190-amino-acid chain; its full sequence is Protein GrpE (190 aa).

Positions M1 to A40 are disordered. The segment covering G22 to A40 has biased composition (polar residues).

Belongs to the GrpE family. Homodimer.

It localises to the cytoplasm. Its function is as follows. Participates actively in the response to hyperosmotic and heat shock by preventing the aggregation of stress-denatured proteins, in association with DnaK and GrpE. It is the nucleotide exchange factor for DnaK and may function as a thermosensor. Unfolded proteins bind initially to DnaJ; upon interaction with the DnaJ-bound protein, DnaK hydrolyzes its bound ATP, resulting in the formation of a stable complex. GrpE releases ADP from DnaK; ATP binding to DnaK triggers the release of the substrate protein, thus completing the reaction cycle. Several rounds of ATP-dependent interactions between DnaJ, DnaK and GrpE are required for fully efficient folding. In Pediococcus pentosaceus (strain ATCC 25745 / CCUG 21536 / LMG 10740 / 183-1w), this protein is Protein GrpE.